Consider the following 218-residue polypeptide: Ras-related protein RabO (218 aa).

15 to 22 provides a ligand contact to GTP; it reads GDYCVGKT. Residues 37–45 carry the Effector region motif; it reads RNCNIGVDF. GTP is bound by residues 63 to 67 and 122 to 125; these read DTGGQ and NKID. Cysteine 215 is modified (cysteine methyl ester). Cysteine 215 carries the S-geranylgeranyl cysteine lipid modification. Positions 216–218 are cleaved as a propeptide — removed in mature form; the sequence is FIL.

Belongs to the small GTPase superfamily. Rab family.

Its subcellular location is the cell membrane. The sequence is that of Ras-related protein RabO (rabO) from Dictyostelium discoideum (Social amoeba).